Here is a 98-residue protein sequence, read N- to C-terminus: NADH-ubiquinone oxidoreductase chain 4L (98 aa).

3 helical membrane-spanning segments follow: residues 1–21, 29–49, and 61–81; these read MSMV…GLLM, SLLC…LMIL, and IILL…LVMI.

This sequence belongs to the complex I subunit 4L family. Core subunit of respiratory chain NADH dehydrogenase (Complex I) which is composed of 45 different subunits.

The protein localises to the mitochondrion inner membrane. It carries out the reaction a ubiquinone + NADH + 5 H(+)(in) = a ubiquinol + NAD(+) + 4 H(+)(out). Functionally, core subunit of the mitochondrial membrane respiratory chain NADH dehydrogenase (Complex I) which catalyzes electron transfer from NADH through the respiratory chain, using ubiquinone as an electron acceptor. Part of the enzyme membrane arm which is embedded in the lipid bilayer and involved in proton translocation. The sequence is that of NADH-ubiquinone oxidoreductase chain 4L (MT-ND4L) from Vicugna pacos (Alpaca).